The chain runs to 373 residues: Probable G-protein coupled receptor 173 (373 aa).

The Extracellular portion of the chain corresponds to 1–26 (MANTTGEPEEVSGALSLPSASAYVKL). An N-linked (GlcNAc...) asparagine glycan is attached at Asn3. A helical transmembrane segment spans residues 27–47 (VLLGLIMCVSLAGNAILSLLV). Topologically, residues 48-59 (LKERALHKAPYY) are cytoplasmic. The chain crosses the membrane as a helical span at residues 60–80 (FLLDLCLADGIRSAICFPFVL). Topologically, residues 81–97 (ASVRHGSSWTFSALSCK) are extracellular. Cysteines 96 and 174 form a disulfide. The helical transmembrane segment at 98 to 118 (IVAFMAVLFCFHAAFMLFCIS) threads the bilayer. Residues 119–139 (VTRYMAIAHHRFYAKRMTLWT) lie on the Cytoplasmic side of the membrane. The helical transmembrane segment at 140 to 160 (CAAVICMAWTLSVAMAFPPVF) threads the bilayer. At 161-188 (DVGTYKFIREEDQCIFEHRYFKANDTLG) the chain is on the extracellular side. Asn184 is a glycosylation site (N-linked (GlcNAc...) asparagine). Residues 189 to 209 (FMLMLAVLMAATHAVYGKLLL) traverse the membrane as a helical segment. Residues 210–287 (FEYRHRKMKP…VKGEKQLGRM (78 aa)) lie on the Cytoplasmic side of the membrane. A helical transmembrane segment spans residues 288–308 (FYAITLLFLLLWSPYIVACYW). At 309-322 (RVFVKACAVPHRYL) the chain is on the extracellular side. Residues 323 to 343 (ATAVWMSFAQAAVNPIVCFLL) form a helical membrane-spanning segment. The Cytoplasmic segment spans residues 344–373 (NKDLKKCLRTHAPCWGTGGAPAPREPYCVM).

This sequence belongs to the G-protein coupled receptor 1 family. As to expression, expressed in the ovary, specifically in granulosa cells of follicles that have passed the primary stage and in oocytes (at protein level). Expressed in preadipocytes.

It is found in the cell membrane. In terms of biological role, is a receptor for the SMIM20 derived peptides Phoenixin-14 and Phoenixin-20. It mediates the Phoenixin-14 and Phoenixin-20 augmentation of gonadotropin-releasing hormone (GNRH) signaling in the hypothalamus and pituitary gland. In the ovary, it mediates the effects of Phoenixin-14 and Phoenixin-20 induced granulosa cell proliferation during follicular growth. The sequence is that of Probable G-protein coupled receptor 173 (Gpr173) from Mus musculus (Mouse).